The sequence spans 209 residues: Peroxynitrite isomerase 2 (209 aa).

The short motif at 56–62 is the GXWXGXG element; the sequence is GVWRGEG. 2 residues coordinate heme b: lysine 172 and histidine 199.

This sequence belongs to the nitrobindin family. In terms of assembly, homodimer. The cofactor is heme b.

The enzyme catalyses peroxynitrite = nitrate. It participates in nitrogen metabolism. In terms of biological role, heme-binding protein able to scavenge peroxynitrite and to protect free L-tyrosine against peroxynitrite-mediated nitration, by acting as a peroxynitrite isomerase that converts peroxynitrite to nitrate. Therefore, this protein likely plays a role in peroxynitrite sensing and in the detoxification of reactive nitrogen and oxygen species (RNS and ROS, respectively). Is able to bind nitric oxide (NO) in vitro, but may act as a sensor of peroxynitrite levels in vivo. The polypeptide is Peroxynitrite isomerase 2 (Mycolicibacterium gilvum (strain PYR-GCK) (Mycobacterium gilvum (strain PYR-GCK))).